A 129-amino-acid polypeptide reads, in one-letter code: M-zodatoxin-Lt8l (129 aa).

The N-terminal stretch at 1-20 (MKYFVVXXALVAAFACIAES) is a signal peptide. A propeptide spanning residues 21-60 (KPAESEHELAEVEEENELADLEDAVWLEDLADLSDLEETR) is cleaved from the precursor.

The protein belongs to the cationic peptide 06 (cytoinsectotoxin) family. Expressed by the venom gland.

The protein localises to the secreted. Insecticidal, cytolytic and antimicrobial peptide. Forms voltage-dependent, ion-permeable channels in membranes. At high concentration causes cell membrane lysis. The polypeptide is M-zodatoxin-Lt8l (cit 1-12) (Lachesana tarabaevi (Spider)).